Here is a 551-residue protein sequence, read N- to C-terminus: Solute carrier family 22 member 6 (551 aa).

Residues methionine 1–leucine 23 lie on the Cytoplasmic side of the membrane. A helical membrane pass occupies residues valine 24–isoleucine 44. Over proline 45 to glutamine 135 the chain is Extracellular. Asparagine 56, asparagine 92, and asparagine 113 each carry an N-linked (GlcNAc...) asparagine glycan. The helical transmembrane segment at leucine 136–alanine 156 threads the bilayer. The Cytoplasmic portion of the chain corresponds to aspartate 157–valine 164. A helical membrane pass occupies residues leucine 165–valine 187. Residues tyrosine 188 to serine 195 lie on the Extracellular side of the membrane. A helical transmembrane segment spans residues glycine 196–isoleucine 216. The Cytoplasmic segment spans residues histidine 217 to threonine 224. The helical transmembrane segment at leucine 225–proline 245 threads the bilayer. At histidine 246–arginine 248 the chain is on the extracellular side. Residues tyrosine 249–isoleucine 269 form a helical membrane-spanning segment. Residues glutamate 270–histidine 337 are Cytoplasmic-facing. A helical membrane pass occupies residues leucine 338–methionine 358. Topologically, residues aspartate 359–tyrosine 368 are extracellular. A helical membrane pass occupies residues leucine 369 to isoleucine 389. Topologically, residues asparagine 390–arginine 395 are cytoplasmic. A helical transmembrane segment spans residues proline 396 to proline 416. Residues arginine 417–serine 425 are Extracellular-facing. Residues leucine 426 to glycine 446 traverse the membrane as a helical segment. The Cytoplasmic portion of the chain corresponds to glutamate 447–serine 484. The chain crosses the membrane as a helical span at residues leucine 485 to proline 505. The Extracellular portion of the chain corresponds to glutamate 506–leucine 551. A disordered region spans residues glutamate 520–leucine 551.

This sequence belongs to the major facilitator (TC 2.A.1) superfamily. Organic cation transporter (TC 2.A.1.19) family. Glycosylated. Glycosylation is necessary for proper targeting of the transporter to the plasma membrane.

The protein localises to the basolateral cell membrane. The protein resides in the basal cell membrane. It carries out the reaction (6R)-L-erythro-5,6,7,8-tetrahydrobiopterin(out) + a dicarboxylate(in) = (6R)-L-erythro-5,6,7,8-tetrahydrobiopterin(in) + a dicarboxylate(out). The catalysed reaction is L-erythro-7,8-dihydrobiopterin(out) + a dicarboxylate(in) = L-erythro-7,8-dihydrobiopterin(in) + a dicarboxylate(out). The enzyme catalyses L-sepiapterin(out) + a dicarboxylate(in) = L-sepiapterin(in) + a dicarboxylate(out). It catalyses the reaction prostaglandin F2alpha(out) + a dicarboxylate(in) = prostaglandin F2alpha(in) + a dicarboxylate(out). It carries out the reaction prostaglandin E2(out) + a dicarboxylate(in) = prostaglandin E2(in) + a dicarboxylate(out). The catalysed reaction is 3',5'-cyclic AMP(out) + a dicarboxylate(in) = 3',5'-cyclic AMP(in) + a dicarboxylate(out). The enzyme catalyses 3',5'-cyclic GMP(out) + a dicarboxylate(in) = 3',5'-cyclic GMP(in) + a dicarboxylate(out). It catalyses the reaction urate(out) + a dicarboxylate(in) = urate(in) + a dicarboxylate(out). It carries out the reaction kynurenate(out) + glutarate(in) = kynurenate(in) + glutarate(out). The catalysed reaction is (indol-3-yl)acetate(out) + a dicarboxylate(in) = (indol-3-yl)acetate(in) + a dicarboxylate(out). The enzyme catalyses indoxyl sulfate(out) + a dicarboxylate(in) = indoxyl sulfate(in) + a dicarboxylate(out). It catalyses the reaction N-benzoylglycine(out) + a dicarboxylate(in) = N-benzoylglycine(in) + a dicarboxylate(out). It carries out the reaction 3-carboxy-4-methyl-5-propyl-2-furanpropanoate(out) + a dicarboxylate(in) = 3-carboxy-4-methyl-5-propyl-2-furanpropanoate(in) + a dicarboxylate(out). In terms of biological role, secondary active transporter that functions as a Na(+)-independent organic anion (OA)/dicarboxylate antiporter where the uptake of one molecule of OA into the cell is coupled with an efflux of one molecule of intracellular dicarboxylate such as 2-oxoglutarate or glutarate. Mediates the uptake of OA across the basolateral side of proximal tubule epithelial cells, thereby contributing to the renal elimination of endogenous OA from the systemic circulation into the urine. Functions as a biopterin transporters involved in the uptake and the secretion of coenzymes tetrahydrobiopterin (BH4), dihydrobiopterin (BH2) and sepiapterin to urine, thereby determining baseline levels of blood biopterins. Transports prostaglandin E2 (PGE2) and prostaglandin F2-alpha (PGF2-alpha) and may contribute to their renal excretion. Also mediates the uptake of cyclic nucleotides such as cAMP and cGMP. Involved in the transport of neuroactive tryptophan metabolites kynurenate (KYNA) and xanthurenate (XA) and may contribute to their secretion from the brain. May transport glutamate. Also involved in the disposition of uremic toxins and potentially toxic xenobiotics by the renal organic anion secretory pathway, helping reduce their undesired toxicological effects on the body. Uremic toxins include the indoxyl sulfate (IS), hippurate/N-benzoylglycine (HA), indole acetate (IA), 3-carboxy-4- methyl-5-propyl-2-furanpropionate (CMPF) and urate. Xenobiotics include the mycotoxin ochratoxin (OTA). May also contribute to the transport of organic compounds in testes across the blood-testis-barrier. May also work as a bidirectional OA/dicarboxylate exchanger. This is Solute carrier family 22 member 6 from Oryctolagus cuniculus (Rabbit).